Reading from the N-terminus, the 591-residue chain is V-type ATP synthase alpha chain (591 aa).

242-249 (GPFGAGKT) contributes to the ATP binding site.

The protein belongs to the ATPase alpha/beta chains family.

The enzyme catalyses ATP + H2O + 4 H(+)(in) = ADP + phosphate + 5 H(+)(out). Produces ATP from ADP in the presence of a proton gradient across the membrane. The V-type alpha chain is a catalytic subunit. In Chlamydia abortus (strain DSM 27085 / S26/3) (Chlamydophila abortus), this protein is V-type ATP synthase alpha chain.